The following is an 88-amino-acid chain: UPF0367 protein Synpcc7942_1638 (88 aa).

Belongs to the UPF0367 family.

In Synechococcus elongatus (strain ATCC 33912 / PCC 7942 / FACHB-805) (Anacystis nidulans R2), this protein is UPF0367 protein Synpcc7942_1638.